The following is an 871-amino-acid chain: Protein translocase subunit SecA (871 aa).

ATP-binding positions include Gln-80, 98–102 (GEGKT), and Asp-537.

This sequence belongs to the SecA family. Monomer and homodimer. Part of the essential Sec protein translocation apparatus which comprises SecA, SecYEG and auxiliary proteins SecDF. Other proteins may also be involved.

It localises to the cell inner membrane. It is found in the cytoplasm. It carries out the reaction ATP + H2O + cellular proteinSide 1 = ADP + phosphate + cellular proteinSide 2.. Functionally, part of the Sec protein translocase complex. Interacts with the SecYEG preprotein conducting channel. Has a central role in coupling the hydrolysis of ATP to the transfer of proteins into and across the cell membrane, serving as an ATP-driven molecular motor driving the stepwise translocation of polypeptide chains across the membrane. This Thermotoga sp. (strain RQ2) protein is Protein translocase subunit SecA.